Consider the following 820-residue polypeptide: MRLHESSSPFVCILVLSCFFLSVSLAQERAFFSGKLNDSETIVSSFRTFRFGFFSPVNSTSRYAGIWYNSVSVQTVIWVANKDKPINDSSGVISVSQDGNLVVTDGQRRVLWSTNVSTQASANSTVAELLDSGNLVLKEASSDAYLWESFKYPTDSWLPNMLVGTNARIGGGNVTITSWKSPSDPSPGSYTAALVLAAYPELFIMNNNNNNSTVWRSGPWNGQMFNGLPDVYAGVFLYRFIVNDDTNGSVTMSYANDSTLRYFYMDYRGSVIRRDWSETRRNWTVGLQVPATECDNYRRCGEFATCNPRKNPLCSCIRGFRPRNLIEWNNGNWSGGCTRRVPLQCERQNNNGSADGFLRLRRMKLPDFARRSEASEPECLRTCLQTCSCIAAAHGLGYGCMIWNGSLVDSQELSASGLDLYIRLAHSEIKTKDKRPILIGTILAGGIFVVAACVLLARRIVMKKRAKKKGRDAEQIFERVEALAGGNKGKLKELPLFEFQVLAAATNNFSLRNKLGQGGFGPVYKGKLQEGQEIAVKRLSRASGQGLEELVNEVVVISKLQHRNLVKLLGCCIAGEERMLVYEFMPKKSLDYYLFDSRRAKLLDWKTRFNIINGICRGLLYLHRDSRLRIIHRDLKASNILLDENLIPKISDFGLARIFPGNEDEANTRRVVGTYGYMAPEYAMGGLFSEKSDVFSLGVILLEIISGRRNSNSTLLAYVWSIWNEGEINSLVDPEIFDLLFEKEIHKCIHIGLLCVQEAANDRPSVSTVCSMLSSEIADIPEPKQPAFISRNNVPEAESSENSDLKDSINNVTITDVTGR.

An N-terminal signal peptide occupies residues 1-26 (MRLHESSSPFVCILVLSCFFLSVSLA). Residues 27–150 (QERAFFSGKL…SSDAYLWESF (124 aa)) form the Bulb-type lectin domain. Topologically, residues 27 to 436 (QERAFFSGKL…SEIKTKDKRP (410 aa)) are extracellular. Asn-37, Asn-58, Asn-87, Asn-115, Asn-123, Asn-173, Asn-211, Asn-247, Asn-256, and Asn-282 each carry an N-linked (GlcNAc...) asparagine glycan. The EGF-like; atypical domain occupies 290–326 (PATECDNYRRCGEFATCNPRKNPLCSCIRGFRPRNLI). Intrachain disulfides connect Cys-294/Cys-306 and Cys-300/Cys-314. N-linked (GlcNAc...) asparagine glycans are attached at residues Asn-332 and Asn-351. One can recognise a PAN domain in the interval 345 to 425 (CERQNNNGSA…SGLDLYIRLA (81 aa)). Disulfide bonds link Cys-379–Cys-400 and Cys-383–Cys-389. An N-linked (GlcNAc...) asparagine glycan is attached at Asn-404. The chain crosses the membrane as a helical span at residues 437-457 (ILIGTILAGGIFVVAACVLLA). Topologically, residues 458–820 (RRIVMKKRAK…NVTITDVTGR (363 aa)) are cytoplasmic. Positions 509–788 (FSLRNKLGQG…DIPEPKQPAF (280 aa)) constitute a Protein kinase domain. Residues 515–523 (LGQGGFGPV) and Lys-537 each bind ATP. Positions 598–615 (RRAKLLDWKTRFNIINGI) are caM-binding. Asp-634 serves as the catalytic Proton acceptor.

This sequence belongs to the protein kinase superfamily. Ser/Thr protein kinase family.

Its subcellular location is the cell membrane. The catalysed reaction is L-seryl-[protein] + ATP = O-phospho-L-seryl-[protein] + ADP + H(+). It catalyses the reaction L-threonyl-[protein] + ATP = O-phospho-L-threonyl-[protein] + ADP + H(+). The protein is G-type lectin S-receptor-like serine/threonine-protein kinase At1g11300 of Arabidopsis thaliana (Mouse-ear cress).